The primary structure comprises 322 residues: tRNA-specific adenosine deaminase subunit TAD3 (322 aa).

Residues Glu-162 to Leu-283 form the CMP/dCMP-type deaminase domain. The Zn(2+) site is built by His-216, Cys-254, Cys-257, and Cys-322.

It belongs to the cytidine and deoxycytidylate deaminase family. ADAT3 subfamily. In terms of assembly, heterodimer with TAD2.

The protein resides in the cytoplasm. The protein localises to the nucleus. It localises to the peroxisome. In terms of biological role, structural subunit of tRNA-specific adenosine deaminase, which deaminates adenosine-34 (the first, also called wobble position of the anticodon) to inosine in many tRNAs. Inosine-34 allows the decoding of 3 different nucleotides at the third position of mRNA codons, as inosine is able to pair with U, C, and A. This Saccharomyces cerevisiae (strain ATCC 204508 / S288c) (Baker's yeast) protein is tRNA-specific adenosine deaminase subunit TAD3 (TAD3).